A 110-amino-acid chain; its full sequence is Red pigment-concentrating prohormone (110 aa).

Positions 1-25 (MVRRTGVTLLVVALVVVALVSSVSA) are cleaved as a signal peptide. Gln-26 carries the pyrrolidone carboxylic acid modification. Trp-33 is modified (tryptophan amide).

Belongs to the AKH/HRTH/RPCH family.

The protein localises to the secreted. Its function is as follows. This hormone adapts the animal to light backgrounds by stimulating concentration of the pigment of its red body-chromatophores. The protein is Red pigment-concentrating prohormone of Carcinus maenas (Common shore crab).